Reading from the N-terminus, the 328-residue chain is GMP reductase (328 aa).

Catalysis depends on Cys-176, which acts as the Thioimidate intermediate. Position 205–228 (205–228 (IIADGGIRTHGDIAKSIRFGASMI)) interacts with NADP(+).

This sequence belongs to the IMPDH/GMPR family. GuaC type 2 subfamily.

The enzyme catalyses IMP + NH4(+) + NADP(+) = GMP + NADPH + 2 H(+). Catalyzes the irreversible NADPH-dependent deamination of GMP to IMP. It functions in the conversion of nucleobase, nucleoside and nucleotide derivatives of G to A nucleotides, and in maintaining the intracellular balance of A and G nucleotides. The protein is GMP reductase of Streptococcus pneumoniae serotype 19F (strain G54).